Here is a 457-residue protein sequence, read N- to C-terminus: Multidrug resistance protein MdtK (457 aa).

12 helical membrane passes run 11–31 (LLAL…MGVV), 53–73 (IWLP…PIIA), 93–113 (WLAI…KFLI), 127–147 (AVGF…YQVL), 160–180 (GMVI…IFIY), 188–208 (LGGV…FLLM), 243–263 (LPIA…ALLI), 280–300 (FSSL…IRVG), 316–336 (YTGI…SIIL), 357–377 (LMLF…GAGV), 387–407 (IFYI…YILG), and 418–438 (PQGF…MIFA).

It belongs to the multi antimicrobial extrusion (MATE) (TC 2.A.66.1) family. MdtK subfamily.

It localises to the cell inner membrane. In terms of biological role, multidrug efflux pump that functions probably as a Na(+)/drug antiporter. This chain is Multidrug resistance protein MdtK, found in Photorhabdus laumondii subsp. laumondii (strain DSM 15139 / CIP 105565 / TT01) (Photorhabdus luminescens subsp. laumondii).